The sequence spans 303 residues: Probable 5-dehydro-4-deoxyglucarate dehydratase (303 aa).

This sequence belongs to the DapA family.

It catalyses the reaction 5-dehydro-4-deoxy-D-glucarate + H(+) = 2,5-dioxopentanoate + CO2 + H2O. It participates in carbohydrate acid metabolism; D-glucarate degradation; 2,5-dioxopentanoate from D-glucarate: step 2/2. This is Probable 5-dehydro-4-deoxyglucarate dehydratase from Leptothrix cholodnii (strain ATCC 51168 / LMG 8142 / SP-6) (Leptothrix discophora (strain SP-6)).